The primary structure comprises 303 residues: UDP-N-acetylenolpyruvoylglucosamine reductase (303 aa).

The FAD-binding PCMH-type domain occupies 27–191; it reads VGGPAARLYK…ISAKLQLTPG (165 aa). The active site involves Arg-171. Catalysis depends on Ser-220, which acts as the Proton donor. Residue Glu-291 is part of the active site.

The protein belongs to the MurB family. Requires FAD as cofactor.

It localises to the cytoplasm. It catalyses the reaction UDP-N-acetyl-alpha-D-muramate + NADP(+) = UDP-N-acetyl-3-O-(1-carboxyvinyl)-alpha-D-glucosamine + NADPH + H(+). Its pathway is cell wall biogenesis; peptidoglycan biosynthesis. Cell wall formation. This is UDP-N-acetylenolpyruvoylglucosamine reductase from Legionella pneumophila (strain Paris).